A 469-amino-acid chain; its full sequence is ATP synthase subunit beta (469 aa).

155–162 (GGAGVGKT) is a binding site for ATP.

It belongs to the ATPase alpha/beta chains family. As to quaternary structure, F-type ATPases have 2 components, CF(1) - the catalytic core - and CF(0) - the membrane proton channel. CF(1) has five subunits: alpha(3), beta(3), gamma(1), delta(1), epsilon(1). CF(0) has three main subunits: a(1), b(2) and c(9-12). The alpha and beta chains form an alternating ring which encloses part of the gamma chain. CF(1) is attached to CF(0) by a central stalk formed by the gamma and epsilon chains, while a peripheral stalk is formed by the delta and b chains.

It is found in the cell inner membrane. The catalysed reaction is ATP + H2O + 4 H(+)(in) = ADP + phosphate + 5 H(+)(out). Produces ATP from ADP in the presence of a proton gradient across the membrane. The catalytic sites are hosted primarily by the beta subunits. In Thermosipho melanesiensis (strain DSM 12029 / CIP 104789 / BI429), this protein is ATP synthase subunit beta.